A 360-amino-acid chain; its full sequence is Probable dual-specificity RNA methyltransferase RlmN (360 aa).

Catalysis depends on E91, which acts as the Proton acceptor. The Radical SAM core domain maps to Q97–D335. The cysteines at positions 104 and 340 are disulfide-linked. [4Fe-4S] cluster is bound by residues C111, C115, and C118. S-adenosyl-L-methionine is bound by residues G163–E164, S195, S218–H220, and N296. C340 serves as the catalytic S-methylcysteine intermediate.

This sequence belongs to the radical SAM superfamily. RlmN family. [4Fe-4S] cluster is required as a cofactor.

The protein resides in the cytoplasm. The enzyme catalyses adenosine(2503) in 23S rRNA + 2 reduced [2Fe-2S]-[ferredoxin] + 2 S-adenosyl-L-methionine = 2-methyladenosine(2503) in 23S rRNA + 5'-deoxyadenosine + L-methionine + 2 oxidized [2Fe-2S]-[ferredoxin] + S-adenosyl-L-homocysteine. It carries out the reaction adenosine(37) in tRNA + 2 reduced [2Fe-2S]-[ferredoxin] + 2 S-adenosyl-L-methionine = 2-methyladenosine(37) in tRNA + 5'-deoxyadenosine + L-methionine + 2 oxidized [2Fe-2S]-[ferredoxin] + S-adenosyl-L-homocysteine. In terms of biological role, specifically methylates position 2 of adenine 2503 in 23S rRNA and position 2 of adenine 37 in tRNAs. This Streptococcus equi subsp. zooepidemicus (strain H70) protein is Probable dual-specificity RNA methyltransferase RlmN.